Reading from the N-terminus, the 137-residue chain is Holo-[acyl-carrier-protein] synthase (137 aa).

2 residues coordinate Mg(2+): Asp8 and Glu57.

Belongs to the P-Pant transferase superfamily. AcpS family. The cofactor is Mg(2+).

It is found in the cytoplasm. The catalysed reaction is apo-[ACP] + CoA = holo-[ACP] + adenosine 3',5'-bisphosphate + H(+). Transfers the 4'-phosphopantetheine moiety from coenzyme A to a Ser of acyl-carrier-protein. This chain is Holo-[acyl-carrier-protein] synthase, found in Cereibacter sphaeroides (strain ATCC 17023 / DSM 158 / JCM 6121 / CCUG 31486 / LMG 2827 / NBRC 12203 / NCIMB 8253 / ATH 2.4.1.) (Rhodobacter sphaeroides).